The chain runs to 215 residues: Ribonuclease T (215 aa).

One can recognise an Exonuclease domain in the interval 20-194 (VVIDVETAGF…YDTLQTAKLF (175 aa)). Residues D23, E25, H181, and D186 each coordinate Mg(2+). H181 serves as the catalytic Proton donor/acceptor.

The protein belongs to the RNase T family. Homodimer. Mg(2+) serves as cofactor.

Trims short 3' overhangs of a variety of RNA species, leaving a one or two nucleotide 3' overhang. Responsible for the end-turnover of tRNA: specifically removes the terminal AMP residue from uncharged tRNA (tRNA-C-C-A). Also appears to be involved in tRNA biosynthesis. The chain is Ribonuclease T from Yersinia pseudotuberculosis serotype O:1b (strain IP 31758).